The sequence spans 267 residues: Probable ribosomal RNA small subunit methyltransferase A (267 aa).

Positions 12, 37, 58, 83, and 100 each coordinate S-adenosyl-L-methionine.

This sequence belongs to the class I-like SAM-binding methyltransferase superfamily. rRNA adenine N(6)-methyltransferase family. RsmA subfamily.

It is found in the cytoplasm. Specifically dimethylates two adjacent adenosines in the loop of a conserved hairpin near the 3'-end of 16S rRNA in the 30S particle. May play a critical role in biogenesis of 30S subunits. This chain is Probable ribosomal RNA small subunit methyltransferase A, found in Methanococcus maripaludis (strain DSM 14266 / JCM 13030 / NBRC 101832 / S2 / LL).